Here is a 229-residue protein sequence, read N- to C-terminus: Glutathione S-transferase 1 (229 aa).

Positions 2–83 (SPVKVFGHPM…YILRKYGGTA (82 aa)) constitute a GST N-terminal domain. Residues 41–42 (HK), 54–55 (KM), and 67–68 (ES) contribute to the glutathione site. The region spanning 93–223 (GIEELAMVDV…RVCKHMPTEF (131 aa)) is the GST C-terminal domain.

This sequence belongs to the GST superfamily. Phi family.

It carries out the reaction RX + glutathione = an S-substituted glutathione + a halide anion + H(+). Functionally, conjugation of reduced glutathione to a wide number of exogenous and endogenous hydrophobic electrophiles. In Triticum aestivum (Wheat), this protein is Glutathione S-transferase 1 (GSTA1).